Consider the following 513-residue polypeptide: ATP synthase subunit alpha (513 aa).

169 to 176 (GDRQIGKT) is an ATP binding site.

This sequence belongs to the ATPase alpha/beta chains family. F-type ATPases have 2 components, CF(1) - the catalytic core - and CF(0) - the membrane proton channel. CF(1) has five subunits: alpha(3), beta(3), gamma(1), delta(1), epsilon(1). CF(0) has three main subunits: a(1), b(2) and c(9-12). The alpha and beta chains form an alternating ring which encloses part of the gamma chain. CF(1) is attached to CF(0) by a central stalk formed by the gamma and epsilon chains, while a peripheral stalk is formed by the delta and b chains.

Its subcellular location is the cell inner membrane. It carries out the reaction ATP + H2O + 4 H(+)(in) = ADP + phosphate + 5 H(+)(out). In terms of biological role, produces ATP from ADP in the presence of a proton gradient across the membrane. The alpha chain is a regulatory subunit. The protein is ATP synthase subunit alpha of Francisella tularensis subsp. mediasiatica (strain FSC147).